Consider the following 377-residue polypeptide: NIF3-like protein 1 (377 aa).

Lysine 109 carries the N6-acetyllysine modification. The mediates interaction with COPS2 stretch occupies residues 244–377 (LLLHTGMGRL…ETDRDPLQVV (134 aa)). Threonine 255 is modified (phosphothreonine). Serine 259 carries the phosphoserine modification.

It belongs to the GTP cyclohydrolase I type 2/NIF3 family. In terms of assembly, homodimer. Interacts with COPS2. Interacts with THOC7.

It is found in the cytoplasm. The protein resides in the nucleus. In terms of biological role, may function as a transcriptional corepressor through its interaction with COPS2, negatively regulating the expression of genes involved in neuronal differentiation. In Homo sapiens (Human), this protein is NIF3-like protein 1.